The sequence spans 102 residues: MNQERLLQVILAPIVSEKSTMIAEKNQQVAFRVAKDATKPEIKAAVEMLFNVKVDGVSTVNVKGKVKRFGRTIGRRSDWKKAYVSLVDGQELDLTATPAAAE.

The protein belongs to the universal ribosomal protein uL23 family. Part of the 50S ribosomal subunit. Contacts protein L29, and trigger factor when it is bound to the ribosome.

One of the early assembly proteins it binds 23S rRNA. One of the proteins that surrounds the polypeptide exit tunnel on the outside of the ribosome. Forms the main docking site for trigger factor binding to the ribosome. The polypeptide is Large ribosomal subunit protein uL23 (Chromobacterium violaceum (strain ATCC 12472 / DSM 30191 / JCM 1249 / CCUG 213 / NBRC 12614 / NCIMB 9131 / NCTC 9757 / MK)).